Consider the following 434-residue polypeptide: 3-phosphoshikimate 1-carboxyvinyltransferase (434 aa).

Lysine 22, serine 23, and arginine 27 together coordinate 3-phosphoshikimate. Lysine 22 is a phosphoenolpyruvate binding site. Glycine 93 and arginine 121 together coordinate phosphoenolpyruvate. Serine 168, serine 169, glutamine 170, serine 199, aspartate 320, and lysine 347 together coordinate 3-phosphoshikimate. Glutamine 170 contributes to the phosphoenolpyruvate binding site. Aspartate 320 (proton acceptor) is an active-site residue. Positions 351, 394, and 419 each coordinate phosphoenolpyruvate.

This sequence belongs to the EPSP synthase family. As to quaternary structure, monomer.

The protein resides in the cytoplasm. It catalyses the reaction 3-phosphoshikimate + phosphoenolpyruvate = 5-O-(1-carboxyvinyl)-3-phosphoshikimate + phosphate. It participates in metabolic intermediate biosynthesis; chorismate biosynthesis; chorismate from D-erythrose 4-phosphate and phosphoenolpyruvate: step 6/7. In terms of biological role, catalyzes the transfer of the enolpyruvyl moiety of phosphoenolpyruvate (PEP) to the 5-hydroxyl of shikimate-3-phosphate (S3P) to produce enolpyruvyl shikimate-3-phosphate and inorganic phosphate. In Burkholderia orbicola (strain MC0-3), this protein is 3-phosphoshikimate 1-carboxyvinyltransferase.